The following is a 271-amino-acid chain: GPN-loop GTPase 3 (271 aa).

13-18 (GVGKST) serves as a coordination point for GTP. The short motif at 70 to 72 (GPN) is the Gly-Pro-Asn (GPN)-loop; involved in dimer interface element. 173–176 (SKMD) is a GTP binding site.

It belongs to the GPN-loop GTPase family. Heterodimers with GPN1 or GPN2. Binds to RNA polymerase II (RNAPII).

Functionally, small GTPase required for proper nuclear import of RNA polymerase II and III (RNAPII and RNAPIII). May act at an RNAP assembly step prior to nuclear import. This Yarrowia lipolytica (strain CLIB 122 / E 150) (Yeast) protein is GPN-loop GTPase 3.